An 81-amino-acid polypeptide reads, in one-letter code: Small ribosomal subunit protein bS20 (81 aa).

It belongs to the bacterial ribosomal protein bS20 family.

Its function is as follows. Binds directly to 16S ribosomal RNA. This chain is Small ribosomal subunit protein bS20, found in Mycoplasma capricolum subsp. capricolum (strain California kid / ATCC 27343 / NCTC 10154).